Here is a 224-residue protein sequence, read N- to C-terminus: Thiamine-phosphate synthase (224 aa).

Residues 41 to 45 and aspartate 77 contribute to the 4-amino-2-methyl-5-(diphosphooxymethyl)pyrimidine site; that span reads QFRDK. Mg(2+) contacts are provided by aspartate 78 and aspartate 97. Serine 116 is a binding site for 4-amino-2-methyl-5-(diphosphooxymethyl)pyrimidine. 143 to 145 provides a ligand contact to 2-[(2R,5Z)-2-carboxy-4-methylthiazol-5(2H)-ylidene]ethyl phosphate; sequence TNS. Lysine 146 is a 4-amino-2-methyl-5-(diphosphooxymethyl)pyrimidine binding site. 2-[(2R,5Z)-2-carboxy-4-methylthiazol-5(2H)-ylidene]ethyl phosphate contacts are provided by residues glycine 174 and 194-195; that span reads IS.

The protein belongs to the thiamine-phosphate synthase family. Mg(2+) is required as a cofactor.

The enzyme catalyses 2-[(2R,5Z)-2-carboxy-4-methylthiazol-5(2H)-ylidene]ethyl phosphate + 4-amino-2-methyl-5-(diphosphooxymethyl)pyrimidine + 2 H(+) = thiamine phosphate + CO2 + diphosphate. It catalyses the reaction 2-(2-carboxy-4-methylthiazol-5-yl)ethyl phosphate + 4-amino-2-methyl-5-(diphosphooxymethyl)pyrimidine + 2 H(+) = thiamine phosphate + CO2 + diphosphate. It carries out the reaction 4-methyl-5-(2-phosphooxyethyl)-thiazole + 4-amino-2-methyl-5-(diphosphooxymethyl)pyrimidine + H(+) = thiamine phosphate + diphosphate. The protein operates within cofactor biosynthesis; thiamine diphosphate biosynthesis; thiamine phosphate from 4-amino-2-methyl-5-diphosphomethylpyrimidine and 4-methyl-5-(2-phosphoethyl)-thiazole: step 1/1. Functionally, condenses 4-methyl-5-(beta-hydroxyethyl)thiazole monophosphate (THZ-P) and 2-methyl-4-amino-5-hydroxymethyl pyrimidine pyrophosphate (HMP-PP) to form thiamine monophosphate (TMP). This is Thiamine-phosphate synthase from Latilactobacillus sakei subsp. sakei (strain 23K) (Lactobacillus sakei subsp. sakei).